A 491-amino-acid polypeptide reads, in one-letter code: Ketol-acid reductoisomerase (NADP(+)) (491 aa).

The 194-residue stretch at 15-208 (AQLGKCRFMG…GGHRAGVLES (194 aa)) folds into the KARI N-terminal Rossmann domain. NADP(+)-binding positions include 45 to 48 (CGAQ), arginine 68, arginine 76, serine 78, and 108 to 110 (DKQ). Residue histidine 132 is part of the active site. Glycine 158 provides a ligand contact to NADP(+). 2 KARI C-terminal knotted domains span residues 209–344 (SFVA…TAPQ) and 345–484 (YEGK…MTDM). The Mg(2+) site is built by aspartate 217, glutamate 221, glutamate 389, and glutamate 393. Serine 414 serves as a coordination point for substrate.

The protein belongs to the ketol-acid reductoisomerase family. It depends on Mg(2+) as a cofactor.

It carries out the reaction (2R)-2,3-dihydroxy-3-methylbutanoate + NADP(+) = (2S)-2-acetolactate + NADPH + H(+). It catalyses the reaction (2R,3R)-2,3-dihydroxy-3-methylpentanoate + NADP(+) = (S)-2-ethyl-2-hydroxy-3-oxobutanoate + NADPH + H(+). It functions in the pathway amino-acid biosynthesis; L-isoleucine biosynthesis; L-isoleucine from 2-oxobutanoate: step 2/4. The protein operates within amino-acid biosynthesis; L-valine biosynthesis; L-valine from pyruvate: step 2/4. Involved in the biosynthesis of branched-chain amino acids (BCAA). Catalyzes an alkyl-migration followed by a ketol-acid reduction of (S)-2-acetolactate (S2AL) to yield (R)-2,3-dihydroxy-isovalerate. In the isomerase reaction, S2AL is rearranged via a Mg-dependent methyl migration to produce 3-hydroxy-3-methyl-2-ketobutyrate (HMKB). In the reductase reaction, this 2-ketoacid undergoes a metal-dependent reduction by NADPH to yield (R)-2,3-dihydroxy-isovalerate. This Escherichia coli O7:K1 (strain IAI39 / ExPEC) protein is Ketol-acid reductoisomerase (NADP(+)).